The chain runs to 546 residues: Flavin-dependent oxygenase ucdF (546 aa).

Residues 81–263 (QGRIPYYAVM…VNTTIRTFPD (183 aa)) form the FAD-binding PCMH-type domain.

This sequence belongs to the oxygen-dependent FAD-linked oxidoreductase family.

Its function is as follows. Nonribosomal peptide synthetase that mediates the biosynthesis of usterphenyllins and uscandidusins, p-terphenyl derivatives. The function of ucdF within the pathway still remains to be determined. UcdE further prenylates position C-14 of ring C of usterphenyllin B to form usterphenyllin A. The pathway begin with the biosynthesis of 4-hydroxyphenylpyruvate (HPPA) from L-tyrosine, possibly by the aminotransferase ucdG. The nonribosomal peptide synthetase ucdA then condenses two HPPA units to produce atromentin. The key step in this pathway is the reduction and dehydration of atromentin to form a terphenyl triol intermediate, performed by the NAD-dependent dehydrogenase ucdB. Further O-methylation by the methyltransferase ucdC forms terphenyllin carrying two methoxy moieties at C-9 and C-12, and subsequent dihydroxylation at C-3 of ring A and C-15 of ring C by the flavin-dependent oxygenase ucdD leads to 3,15-dihydroxyterphenyllin. Prenylation by ucdE at position C-5 of ring A forms usterphenyllin B, and is followed by a second prenylation at position C-14 of ring C to form usterphenyllin A. The following furan ring formation that leads to uscandidusins A and B was proven to be an unexpected spontaneous non-enzymatic reaction. The polypeptide is Flavin-dependent oxygenase ucdF (Aspergillus ustus).